The chain runs to 654 residues: U-box domain-containing protein 12 (654 aa).

The region spanning 255 to 329 is the U-box domain; sequence IPPEEFRCPI…AQWCESNGIE (75 aa). The disordered stretch occupies residues 329–352; it reads EPPKRPNISQPSSKASSSSSAPDD. Over residues 337 to 349 the composition is skewed to low complexity; sequence SQPSSKASSSSSA. ARM repeat units lie at residues 387-427, 430-469, 471-510, 512-551, and 553-592; these read NHNR…NLSI, ENKGKIVYSSGAVPGIVHVLQKGSMEARENAAATLFSLSV, DENKVTIGAAGAIPPLVTLLSEGSQRGKKDAATALFNLCI, QGNKGKAVRAGLVPVLMRLLTEPESGMVDESLSILAILSS, and PDGKSEVGAADAVPVLVDFIRSGSPRNKENSAAVLVHLCS.

The catalysed reaction is S-ubiquitinyl-[E2 ubiquitin-conjugating enzyme]-L-cysteine + [acceptor protein]-L-lysine = [E2 ubiquitin-conjugating enzyme]-L-cysteine + N(6)-ubiquitinyl-[acceptor protein]-L-lysine.. Its pathway is protein modification; protein ubiquitination. Functionally, functions as an E3 ubiquitin ligase. This Arabidopsis thaliana (Mouse-ear cress) protein is U-box domain-containing protein 12 (PUB12).